The primary structure comprises 167 residues: MLVIHQRLPARSPRWDEELHLTYEARSKSRLRCFAASGEEVGLFLERGQPPLADGDCLEARDGRLVRVVARSERLLHVTCASPLELTRAAYHLGNRHVALQVGDGWLRLLDDYVLKAMLEQLGATVEAIEAPFQPEHGAYGGGHHHSHHGEAEFNYAPRLHQFGVRR.

It belongs to the UreE family.

Its subcellular location is the cytoplasm. Involved in urease metallocenter assembly. Binds nickel. Probably functions as a nickel donor during metallocenter assembly. This chain is Urease accessory protein UreE, found in Pseudomonas aeruginosa (strain LESB58).